A 474-amino-acid chain; its full sequence is Cysteine--tRNA ligase (474 aa).

Cysteine 30 contributes to the Zn(2+) binding site. Residues 32-42 carry the 'HIGH' region motif; it reads PTVYNYAHIGN. Zn(2+) is bound by residues cysteine 215, histidine 240, and glutamate 244. Positions 272–276 match the 'KMSKS' region motif; it reads KMSKS. Lysine 275 provides a ligand contact to ATP.

This sequence belongs to the class-I aminoacyl-tRNA synthetase family. Monomer. Requires Zn(2+) as cofactor.

Its subcellular location is the cytoplasm. It catalyses the reaction tRNA(Cys) + L-cysteine + ATP = L-cysteinyl-tRNA(Cys) + AMP + diphosphate. This chain is Cysteine--tRNA ligase, found in Brachyspira hyodysenteriae (strain ATCC 49526 / WA1).